The sequence spans 342 residues: Phosphate acyltransferase (342 aa).

This sequence belongs to the PlsX family. Homodimer. Probably interacts with PlsY.

Its subcellular location is the cytoplasm. The enzyme catalyses a fatty acyl-[ACP] + phosphate = an acyl phosphate + holo-[ACP]. It functions in the pathway lipid metabolism; phospholipid metabolism. Functionally, catalyzes the reversible formation of acyl-phosphate (acyl-PO(4)) from acyl-[acyl-carrier-protein] (acyl-ACP). This enzyme utilizes acyl-ACP as fatty acyl donor, but not acyl-CoA. The polypeptide is Phosphate acyltransferase (Shewanella sediminis (strain HAW-EB3)).